The following is a 114-amino-acid chain: Small ribosomal subunit protein uS14m (114 aa).

Belongs to the universal ribosomal protein uS14 family.

It localises to the mitochondrion. The chain is Small ribosomal subunit protein uS14m (MRP2) from Eremothecium gossypii (strain ATCC 10895 / CBS 109.51 / FGSC 9923 / NRRL Y-1056) (Yeast).